Reading from the N-terminus, the 111-residue chain is Fluoride-specific ion channel FluC 3 (111 aa).

3 consecutive transmembrane segments (helical) span residues 26–46, 53–73, and 91–111; these read IPAG…LLTF, VVYL…TFAY, and IFLN…ALML. Na(+) is bound by residues Gly-63 and Thr-66.

The protein belongs to the fluoride channel Fluc/FEX (TC 1.A.43) family.

The protein localises to the cell membrane. It carries out the reaction fluoride(in) = fluoride(out). Its activity is regulated as follows. Na(+) is not transported, but it plays an essential structural role and its presence is essential for fluoride channel function. Fluoride-specific ion channel. Important for reducing fluoride concentration in the cell, thus reducing its toxicity. The polypeptide is Fluoride-specific ion channel FluC 3 (Methanosarcina acetivorans (strain ATCC 35395 / DSM 2834 / JCM 12185 / C2A)).